The sequence spans 88 residues: Parvalbumin beta 3 (88 aa).

Alanine 1 is subject to N-acetylalanine. The 36-residue stretch at 31 to 66 folds into the EF-hand domain; it reads KSPEEVKKFFAIIDQDHSGFIEEEELKLFLQTFSAG. Aspartate 44, aspartate 46, serine 48, phenylalanine 50, glutamate 52, glutamate 55, and glutamate 81 together coordinate Ca(2+).

It belongs to the parvalbumin family.

In muscle, parvalbumin is thought to be involved in relaxation after contraction. It binds two calcium ions. This chain is Parvalbumin beta 3, found in Merluccius productus (North Pacific hake).